Consider the following 399-residue polypeptide: CCA-adding enzyme (399 aa).

Gly-32 and Arg-35 together coordinate ATP. Residues Gly-32 and Arg-35 each contribute to the CTP site. The Mg(2+) site is built by Asp-45 and Asp-47. ATP is bound by residues Arg-116, Asp-159, Arg-162, Arg-165, and Arg-168. The CTP site is built by Arg-116, Asp-159, Arg-162, Arg-165, and Arg-168.

It belongs to the tRNA nucleotidyltransferase/poly(A) polymerase family. Bacterial CCA-adding enzyme type 3 subfamily. In terms of assembly, homodimer. The cofactor is Mg(2+).

The catalysed reaction is a tRNA precursor + 2 CTP + ATP = a tRNA with a 3' CCA end + 3 diphosphate. It catalyses the reaction a tRNA with a 3' CCA end + 2 CTP + ATP = a tRNA with a 3' CCACCA end + 3 diphosphate. In terms of biological role, catalyzes the addition and repair of the essential 3'-terminal CCA sequence in tRNAs without using a nucleic acid template. Adds these three nucleotides in the order of C, C, and A to the tRNA nucleotide-73, using CTP and ATP as substrates and producing inorganic pyrophosphate. tRNA 3'-terminal CCA addition is required both for tRNA processing and repair. Also involved in tRNA surveillance by mediating tandem CCA addition to generate a CCACCA at the 3' terminus of unstable tRNAs. While stable tRNAs receive only 3'-terminal CCA, unstable tRNAs are marked with CCACCA and rapidly degraded. The sequence is that of CCA-adding enzyme from Streptococcus pneumoniae serotype 4 (strain ATCC BAA-334 / TIGR4).